Here is a 181-residue protein sequence, read N- to C-terminus: Adenine phosphoribosyltransferase (181 aa).

It belongs to the purine/pyrimidine phosphoribosyltransferase family. In terms of assembly, homodimer.

The protein localises to the cytoplasm. It carries out the reaction AMP + diphosphate = 5-phospho-alpha-D-ribose 1-diphosphate + adenine. The protein operates within purine metabolism; AMP biosynthesis via salvage pathway; AMP from adenine: step 1/1. In terms of biological role, catalyzes a salvage reaction resulting in the formation of AMP, that is energically less costly than de novo synthesis. The chain is Adenine phosphoribosyltransferase from Rhodopseudomonas palustris (strain BisB5).